Consider the following 898-residue polypeptide: DNA mismatch repair protein MutS (898 aa).

Position 646-653 (646-653) interacts with ATP; that stretch reads GPNMGGKS.

Belongs to the DNA mismatch repair MutS family.

In terms of biological role, this protein is involved in the repair of mismatches in DNA. It is possible that it carries out the mismatch recognition step. This protein has a weak ATPase activity. This Brucella ovis (strain ATCC 25840 / 63/290 / NCTC 10512) protein is DNA mismatch repair protein MutS.